A 90-amino-acid polypeptide reads, in one-letter code: Small ribosomal subunit protein bS16 (90 aa).

This sequence belongs to the bacterial ribosomal protein bS16 family.

This chain is Small ribosomal subunit protein bS16, found in Anoxybacillus flavithermus (strain DSM 21510 / WK1).